The chain runs to 337 residues: Dihydroorotate dehydrogenase (quinone) (337 aa).

FMN is bound by residues 62 to 66 (AGLDK) and threonine 86. Lysine 66 is a substrate binding site. Substrate is bound at residue 111–115 (NRMGF). Residues asparagine 140 and asparagine 173 each contribute to the FMN site. Asparagine 173 lines the substrate pocket. Catalysis depends on serine 176, which acts as the Nucleophile. Asparagine 178 is a binding site for substrate. Lysine 218 and threonine 246 together coordinate FMN. Residue 247 to 248 (NT) participates in substrate binding. FMN is bound by residues glycine 269, glycine 298, and 319 to 320 (YS).

It belongs to the dihydroorotate dehydrogenase family. Type 2 subfamily. In terms of assembly, monomer. FMN serves as cofactor.

The protein localises to the cell membrane. It carries out the reaction (S)-dihydroorotate + a quinone = orotate + a quinol. It participates in pyrimidine metabolism; UMP biosynthesis via de novo pathway; orotate from (S)-dihydroorotate (quinone route): step 1/1. Catalyzes the conversion of dihydroorotate to orotate with quinone as electron acceptor. In Wigglesworthia glossinidia brevipalpis, this protein is Dihydroorotate dehydrogenase (quinone).